We begin with the raw amino-acid sequence, 98 residues long: Citrate lyase acyl carrier protein (98 aa).

S14 carries the O-(phosphoribosyl dephospho-coenzyme A)serine modification.

Belongs to the CitD family. In terms of assembly, oligomer with a subunit composition of (alpha,beta,gamma)6.

The protein localises to the cytoplasm. In terms of biological role, covalent carrier of the coenzyme of citrate lyase. The polypeptide is Citrate lyase acyl carrier protein (Vibrio cholerae serotype O1 (strain ATCC 39315 / El Tor Inaba N16961)).